The chain runs to 366 residues: Tyrosine--tRNA ligase (366 aa).

Residues Tyr41, Tyr167, Gln171, Asp174, and Gln189 each coordinate L-tyrosine. The short motif at 241 to 245 (KMSKS) is the 'KMSKS' region element. An ATP-binding site is contributed by Lys244.

This sequence belongs to the class-I aminoacyl-tRNA synthetase family. TyrS type 4 subfamily. As to quaternary structure, homodimer.

It localises to the cytoplasm. The catalysed reaction is tRNA(Tyr) + L-tyrosine + ATP = L-tyrosyl-tRNA(Tyr) + AMP + diphosphate + H(+). Its function is as follows. Catalyzes the attachment of tyrosine to tRNA(Tyr) in a two-step reaction: tyrosine is first activated by ATP to form Tyr-AMP and then transferred to the acceptor end of tRNA(Tyr). This is Tyrosine--tRNA ligase from Saccharolobus solfataricus (strain ATCC 35092 / DSM 1617 / JCM 11322 / P2) (Sulfolobus solfataricus).